A 353-amino-acid chain; its full sequence is Beta-agarase B (353 aa).

A signal peptide spans 1 to 17; sequence MYLIYLRLVFCCALLLG. Cysteine 18 carries the N-palmitoyl cysteine lipid modification. Residue cysteine 18 is the site of S-diacylglycerol cysteine attachment. The disordered stretch occupies residues 30-58; the sequence is LPVEQEQEQETEQEGEPEESSEQDLVEEV. Over residues 32 to 58 the composition is skewed to acidic residues; sequence VEQEQEQETEQEGEPEESSEQDLVEEV. The 296-residue stretch at 58 to 353 folds into the GH16 domain; sequence VDWKDIPVPA…WIRIYKPVEK (296 aa). Residues 105-107 and aspartate 181 contribute to the substrate site; that span reads YHN. The Nucleophile role is filled by glutamate 184. The active-site Proton donor is glutamate 189. Residues histidine 215, arginine 219, aspartate 224, glutamine 226, and glutamate 308 each contribute to the substrate site.

The protein belongs to the glycosyl hydrolase 16 family. As to quaternary structure, homodimer.

Its subcellular location is the cell outer membrane. The enzyme catalyses Hydrolysis of (1-&gt;4)-beta-D-galactosidic linkages in agarose, giving the tetramer as the predominant product.. Cleaves the beta-1,4-linkages between beta-D-galactose and alpha-L-3,6-anhydro-galactose residues in agarose. Cleaves agarose in a random manner with retention of the anomeric-bond configuration, producing beta-anomers that give rise progressively to alpha-anomers when mutarotation takes place. Also tolerant to hybrid substrates containing C6-sulfate groups at the -4, +1, and +3 positions. This Zobellia galactanivorans (strain DSM 12802 / CCUG 47099 / CIP 106680 / NCIMB 13871 / Dsij) protein is Beta-agarase B (agaB).